Reading from the N-terminus, the 238-residue chain is Large ribosomal subunit protein uL5c (238 aa).

The protein belongs to the universal ribosomal protein uL5 family. As to quaternary structure, part of the 50S ribosomal subunit; contacts the 5S rRNA.

Its subcellular location is the plastid. The protein resides in the chloroplast. Its function is as follows. Binds 5S rRNA, forms part of the central protuberance of the 50S subunit. In Phaeodactylum tricornutum (strain CCAP 1055/1), this protein is Large ribosomal subunit protein uL5c (rpl5).